The chain runs to 420 residues: Glutamyl-tRNA reductase (420 aa).

Residues 49 to 52, Ser-109, 114 to 116, and Gln-120 each bind substrate; these read TCNR and EPQ. Cys-50 serves as the catalytic Nucleophile. 189 to 194 is an NADP(+) binding site; sequence GAGETI.

Belongs to the glutamyl-tRNA reductase family. As to quaternary structure, homodimer.

It catalyses the reaction (S)-4-amino-5-oxopentanoate + tRNA(Glu) + NADP(+) = L-glutamyl-tRNA(Glu) + NADPH + H(+). It participates in porphyrin-containing compound metabolism; protoporphyrin-IX biosynthesis; 5-aminolevulinate from L-glutamyl-tRNA(Glu): step 1/2. Functionally, catalyzes the NADPH-dependent reduction of glutamyl-tRNA(Glu) to glutamate 1-semialdehyde (GSA). The polypeptide is Glutamyl-tRNA reductase (Serratia proteamaculans (strain 568)).